Here is a 46-residue protein sequence, read N- to C-terminus: Putative antitoxin VapB3 (46 aa).

This sequence belongs to the UPF0165 family.

Possibly the antitoxin component of a type II toxin-antitoxin (TA) system. Its cognate toxin is VapC3 (Potential). The chain is Putative antitoxin VapB3 (vapB3) from Pyrococcus furiosus (strain ATCC 43587 / DSM 3638 / JCM 8422 / Vc1).